Reading from the N-terminus, the 173-residue chain is MSYKNVKNLTDDFTTLGHIAWLWANSPLHKEWSISLFTKNILPAIQHDQYILLMRDEFPVAFCSWANLTLTNEVKYVRDVTSLTFEDWNSGERKWLIDWIAPFGDNNTLYRYMRKKFPNEVFRAIRVYPGSTEAKIIHVQGGQINKFTAKKLIQQYQEELIQVLNNHKKIVRG.

Residues H29 and D98 contribute to the active site.

This sequence belongs to the RTX toxin acyltransferase family. As to quaternary structure, homodimer.

It localises to the cytoplasm. The catalysed reaction is a fatty acyl-[ACP] + L-lysyl-[protein] = N(6)-(fatty acyl)-L-lysyl-[protein] + holo-[ACP] + H(+). Its function is as follows. Protein-lysine acyltransferase that catalyzes fatty acylation of the protoxin, thereby converting it to the active toxin. This Actinobacillus pleuropneumoniae (Haemophilus pleuropneumoniae) protein is RTX-III toxin-activating lysine-acyltransferase ApxIIC (apxIIIC).